The sequence spans 103 residues: Large ribosomal subunit protein bL21 (103 aa).

Belongs to the bacterial ribosomal protein bL21 family. As to quaternary structure, part of the 50S ribosomal subunit. Contacts protein L20.

Functionally, this protein binds to 23S rRNA in the presence of protein L20. The sequence is that of Large ribosomal subunit protein bL21 from Vibrio parahaemolyticus serotype O3:K6 (strain RIMD 2210633).